Consider the following 274-residue polypeptide: Glucosamine-6-phosphate deaminase (274 aa).

Asp-71 functions as the Proton acceptor; for enolization step in the catalytic mechanism. Asp-140 functions as the For ring-opening step in the catalytic mechanism. Residue His-142 is the Proton acceptor; for ring-opening step of the active site. Glu-147 (for ring-opening step) is an active-site residue.

Belongs to the glucosamine/galactosamine-6-phosphate isomerase family. NagB subfamily.

The enzyme catalyses alpha-D-glucosamine 6-phosphate + H2O = beta-D-fructose 6-phosphate + NH4(+). It functions in the pathway amino-sugar metabolism; N-acetylneuraminate degradation; D-fructose 6-phosphate from N-acetylneuraminate: step 5/5. Functionally, catalyzes the reversible isomerization-deamination of glucosamine 6-phosphate (GlcN6P) to form fructose 6-phosphate (Fru6P) and ammonium ion. The sequence is that of Glucosamine-6-phosphate deaminase from Fusobacterium nucleatum subsp. nucleatum (strain ATCC 25586 / DSM 15643 / BCRC 10681 / CIP 101130 / JCM 8532 / KCTC 2640 / LMG 13131 / VPI 4355).